The following is a 332-amino-acid chain: Alpha/beta hydrolase domain-containing protein aho-3 (332 aa).

A compositionally biased stretch (low complexity) spans 1-15; sequence MSSGAPSGSSMSSTP. The tract at residues 1-24 is disordered; that stretch reads MSSGAPSGSSMSSTPGSPPPRAGG. Residues Ser-191, Asp-256, and His-285 each act as charge relay system in the active site.

It belongs to the AB hydrolase superfamily. ABHD17 family. In terms of processing, palmitoylated on cysteine residues located in a cysteine cluster at the N-terminus which promotes membrane localization and localization to sensory neuron endings. Expressed in a subset of neurons including AIY, HSN, ADF, AFD, AWC, AWB and NSM, hypodermis, pharyngeal muscle and intestine.

It is found in the cell membrane. It localises to the cytoplasmic vesicle membrane. The enzyme catalyses S-hexadecanoyl-L-cysteinyl-[protein] + H2O = L-cysteinyl-[protein] + hexadecanoate + H(+). Functionally, hydrolyzes fatty acids from S-acylated cysteine residues in proteins. Acts in sensory neurons including AWC to regulate starvation-induced thermotaxis plasticity and salt learning behavior. This is Alpha/beta hydrolase domain-containing protein aho-3 from Caenorhabditis elegans.